Here is a 215-residue protein sequence, read N- to C-terminus: Transmembrane protein 267 (215 aa).

3 helical membrane-spanning segments follow: residues 77 to 97 (FGEIILAGFLASVIDIDHFLL), 114 to 134 (FLHCSTVIPTVVLTLKFTMHF), and 178 to 198 (FWLYVIITSSLPHICSFVMYF).

The protein localises to the membrane. The sequence is that of Transmembrane protein 267 (TMEM267) from Bos taurus (Bovine).